The following is a 1380-amino-acid chain: DNA-directed RNA polymerase subunit beta (1380 aa).

Belongs to the RNA polymerase beta chain family. The RNAP catalytic core consists of 2 alpha, 1 beta, 1 beta' and 1 omega subunit. When a sigma factor is associated with the core the holoenzyme is formed, which can initiate transcription.

It catalyses the reaction RNA(n) + a ribonucleoside 5'-triphosphate = RNA(n+1) + diphosphate. Functionally, DNA-dependent RNA polymerase catalyzes the transcription of DNA into RNA using the four ribonucleoside triphosphates as substrates. In Nitrobacter hamburgensis (strain DSM 10229 / NCIMB 13809 / X14), this protein is DNA-directed RNA polymerase subunit beta.